The following is a 955-amino-acid chain: Structure-specific endonuclease subunit SLX4 (955 aa).

7 disordered regions span residues 75–173 (QAEQ…RTTS), 189–231 (PVTT…TVSR), 352–376 (GPSN…KKPR), 539–608 (EMQK…PTKI), 621–648 (PIVA…PPPR), 705–784 (AAGQ…ASPD), and 819–846 (LDSD…EKDS). Residues 123–137 (RKARKTANGVTKKKR) show a composition bias toward basic residues. A compositionally biased stretch (polar residues) spans 150–159 (NEITTPTKNQ). The segment covering 189 to 198 (PVTTSTTDLT) has biased composition (low complexity). Basic residues predominate over residues 209-225 (TKSRVRKTSSAASRKKK). Residues 352-362 (GPSNDSKIPNQ) show a composition bias toward polar residues. Residues 539–551 (EMQKSPSRSEPKG) show a composition bias toward basic and acidic residues. Over residues 579–601 (SANSAEHTLKTQASKSTHFASTT) the composition is skewed to polar residues. Low complexity-rich tracts occupy residues 705-720 (AAGQ…RTSA) and 727-737 (KTSTAAAAAKS). Composition is skewed to basic residues over residues 738–748 (PTKRPVGRPRK) and 767–776 (KRPRGRPKKN). The segment covering 828 to 841 (SPSPSLSPEPVFSS) has biased composition (low complexity).

The protein belongs to the SLX4 family. As to quaternary structure, forms a heterodimer with SLX1. Phosphorylated in response to DNA damage.

It localises to the nucleus. In terms of biological role, regulatory subunit of the SLX1-SLX4 structure-specific endonuclease that resolves DNA secondary structures generated during DNA repair and recombination. Has endonuclease activity towards branched DNA substrates, introducing single-strand cuts in duplex DNA close to junctions with ss-DNA. This Pyricularia oryzae (strain 70-15 / ATCC MYA-4617 / FGSC 8958) (Rice blast fungus) protein is Structure-specific endonuclease subunit SLX4.